A 204-amino-acid chain; its full sequence is MSAVRSKICGITRIEDALAAVEAGADAIGFVFYAKSPRAVTVQQARSIIAALPPFVTTVGLFVNASRCELGEILDAVPLDLLQFHGDETAAECEGWHRPYIKALRVKAGDNIAAACDAYPSASGVLLDTYVEGVPGGTGEAFDWSLIPQGLSKPLILAGGLTPENVADAIARVRPYAVDVSGGVEASKGIKDHAKIRAFINAVR.

This sequence belongs to the TrpF family.

The catalysed reaction is N-(5-phospho-beta-D-ribosyl)anthranilate = 1-(2-carboxyphenylamino)-1-deoxy-D-ribulose 5-phosphate. The protein operates within amino-acid biosynthesis; L-tryptophan biosynthesis; L-tryptophan from chorismate: step 3/5. This Pseudomonas fluorescens (strain Pf0-1) protein is N-(5'-phosphoribosyl)anthranilate isomerase.